The chain runs to 418 residues: Tryptophan synthase beta chain (418 aa).

K109 carries the post-translational modification N6-(pyridoxal phosphate)lysine.

Belongs to the TrpB family. In terms of assembly, tetramer of two alpha and two beta chains. Requires pyridoxal 5'-phosphate as cofactor.

The enzyme catalyses (1S,2R)-1-C-(indol-3-yl)glycerol 3-phosphate + L-serine = D-glyceraldehyde 3-phosphate + L-tryptophan + H2O. It functions in the pathway amino-acid biosynthesis; L-tryptophan biosynthesis; L-tryptophan from chorismate: step 5/5. Functionally, the beta subunit is responsible for the synthesis of L-tryptophan from indole and L-serine. This Thermus thermophilus (strain ATCC 27634 / DSM 579 / HB8) protein is Tryptophan synthase beta chain.